A 547-amino-acid polypeptide reads, in one-letter code: Solute carrier family 22 member 7 (547 aa).

A helical membrane pass occupies residues 21-41 (VALLALPRVLLPMHFLLPIFL). Positions 91–103 (NSTLWGEGQNSGE) are enriched in polar residues. A disordered region spans residues 91–112 (NSTLWGEGQNSGEQPEGEPSTV). A run of 11 helical transmembrane segments spans residues 145–165 (AISTFFFAGVLVGAEVYGYLS), 179–199 (VSSLALGLASAASVSYIMFAI), 203–223 (LTGMALAGFTIIVMPLELEWL), 233–253 (VLSSTFWTGGVMLLALIGYLI), 258–278 (WLLLTVTLPCVPGILTLWWVP), 345–365 (ISLCCMVVWFGVNFSYYGVSL), 367–387 (LSGLGLNVYLTQLVFGAVELP), 403–423 (LTMAGTLLGAALAVGLRILVS), 431–451 (TALAVMGKAFSEAAFTTAYLF), 465–485 (MGLTALVGRLGGSLAPLAALL), and 492–512 (LPKLAYGGIALLAACTALLLP). The interval 521-547 (ETIQDVERKSAPSSLQEEEMPMKQVQD) is disordered.

This sequence belongs to the major facilitator (TC 2.A.1) superfamily. Organic cation transporter (TC 2.A.1.19) family.

It is found in the basolateral cell membrane. The protein localises to the apical cell membrane. Its subcellular location is the cell membrane. It carries out the reaction orotate(out) + L-glutamate(in) = orotate(in) + L-glutamate(out). It catalyses the reaction 3',5'-cyclic GMP(in) = 3',5'-cyclic GMP(out). The catalysed reaction is GMP(in) = GMP(out). The enzyme catalyses 2'-deoxyguanosine(in) = 2'-deoxyguanosine(out). It carries out the reaction GDP(in) = GDP(out). It catalyses the reaction guanosine(in) = guanosine(out). The catalysed reaction is GTP(in) = GTP(out). The enzyme catalyses 3',5'-cyclic AMP(in) = 3',5'-cyclic AMP(out). It carries out the reaction creatinine(in) = creatinine(out). It catalyses the reaction prostaglandin E2(out) = prostaglandin E2(in). The catalysed reaction is 2-oxoglutarate(in) = 2-oxoglutarate(out). The enzyme catalyses glutarate(in) = glutarate(out). It carries out the reaction urate(out) = urate(in). It catalyses the reaction estrone 3-sulfate(out) = estrone 3-sulfate(in). Its function is as follows. Functions as a Na(+)-independent bidirectional multispecific transporter. Contributes to the renal and hepatic elimination of endogenous organic compounds from the systemic circulation into the urine and bile, respectively. Capable of transporting a wide range of purine and pyrimidine nucleobases, nucleosides and nucleotides, with cGMP, 2'deoxyguanosine and GMP being the preferred substrates. Functions as a pH- and chloride-independent cGMP bidirectional facilitative transporter that can regulate both intracellular and extracellular levels of cGMP and may be involved in cGMP signaling pathways. Mediates orotate/glutamate bidirectional exchange and most likely display a physiological role in hepatic release of glutamate into the blood. Involved in renal secretion and possible reabsorption of creatinine. Able to uptake prostaglandin E2 (PGE2) and may contribute to PGE2 renal excretion. Also transports alpha-ketoglutarate and urate. Apart from the orotate/glutamate exchange, the counterions for the uptake of other SLC22A7/OAT2 substrates remain to be identified. This chain is Solute carrier family 22 member 7 (SLC22A7), found in Bos taurus (Bovine).